A 181-amino-acid chain; its full sequence is Large ribosomal subunit protein uL5 (181 aa).

It belongs to the universal ribosomal protein uL5 family. As to quaternary structure, part of the 50S ribosomal subunit; part of the 5S rRNA/L5/L18/L25 subcomplex. Contacts the 5S rRNA and the P site tRNA. Forms a bridge to the 30S subunit in the 70S ribosome.

Functionally, this is one of the proteins that bind and probably mediate the attachment of the 5S RNA into the large ribosomal subunit, where it forms part of the central protuberance. In the 70S ribosome it contacts protein S13 of the 30S subunit (bridge B1b), connecting the 2 subunits; this bridge is implicated in subunit movement. Contacts the P site tRNA; the 5S rRNA and some of its associated proteins might help stabilize positioning of ribosome-bound tRNAs. The chain is Large ribosomal subunit protein uL5 from Campylobacter jejuni subsp. doylei (strain ATCC BAA-1458 / RM4099 / 269.97).